A 1482-amino-acid polypeptide reads, in one-letter code: Chromosome partition protein MukB (1482 aa).

An ATP-binding site is contributed by 34-41 (GGNGAGKS). 5 coiled-coil regions span residues 326-472 (LEAD…QTAH), 507-602 (NQRH…RRAP), 780-805 (RAAR…ATLS), 832-1110 (DDPE…REQV), and 1209-1265 (VEAI…LQSV). Positions 666–783 (PGGSEDPRLN…SLPLFGRAAR (118 aa)) are flexible hinge.

The protein belongs to the SMC family. MukB subfamily. Homodimerization via its hinge domain. Binds to DNA via its C-terminal region. Interacts, and probably forms a ternary complex, with MukE and MukF via its C-terminal region. The complex formation is stimulated by calcium or magnesium. Interacts with tubulin-related protein FtsZ.

It is found in the cytoplasm. The protein resides in the nucleoid. Functionally, plays a central role in chromosome condensation, segregation and cell cycle progression. Functions as a homodimer, which is essential for chromosome partition. Involved in negative DNA supercoiling in vivo, and by this means organize and compact chromosomes. May achieve or facilitate chromosome segregation by condensation DNA from both sides of a centrally located replisome during cell division. This Klebsiella pneumoniae subsp. pneumoniae (strain ATCC 700721 / MGH 78578) protein is Chromosome partition protein MukB.